Consider the following 142-residue polypeptide: Large ribosomal subunit protein uL13 (142 aa).

This sequence belongs to the universal ribosomal protein uL13 family. As to quaternary structure, part of the 50S ribosomal subunit.

Functionally, this protein is one of the early assembly proteins of the 50S ribosomal subunit, although it is not seen to bind rRNA by itself. It is important during the early stages of 50S assembly. This is Large ribosomal subunit protein uL13 from Psychrobacter cryohalolentis (strain ATCC BAA-1226 / DSM 17306 / VKM B-2378 / K5).